Reading from the N-terminus, the 227-residue chain is MQIQPHPSGALLLLLLSNLLMWENVASVPRCIMENGGCQKVLNYLFNMTSTISESFNTLSSETLNDFYTEFDPHQTFQNRPAMTCHTSSRSIPNNKRKAERMEPAALLNVIIRMLASWKNLLYHVENNMANLDGTPYAIISKVKLIDRQIKKLTKNLQDIKTILSQVHPELKEKENYPVWSGEPYVQKSKRRTQLFGLHSLFFCLYSDAEKVSDYVNILRNKIVPNE.

Residues Met-1–Ser-27 form the signal peptide. Asn-47 is a glycosylation site (N-linked (GlcNAc...) asparagine). Cys-85 and Cys-204 are disulfide-bonded.

It belongs to the somatotropin/prolactin family. In terms of tissue distribution, expressed specifically in placenta. Highly expressed in invasive trophoblast cells lining the central placental vessel.

The protein localises to the secreted. The sequence is that of Prolactin-5A1 (Prl5a1) from Rattus norvegicus (Rat).